The following is a 517-amino-acid chain: Maturase K (517 aa).

It belongs to the intron maturase 2 family. MatK subfamily.

It localises to the plastid. It is found in the chloroplast. Usually encoded in the trnK tRNA gene intron. Probably assists in splicing its own and other chloroplast group II introns. This Acer pseudoplatanus (Sycamore maple) protein is Maturase K.